The following is a 254-amino-acid chain: Geranylgeranylglyceryl phosphate synthase (254 aa).

Asp-27 and Ser-56 together coordinate Mg(2+). Sn-glycerol 1-phosphate-binding positions include 174–180, 212–213, and 234–235; these read YLEAGSG, GG, and GT.

It belongs to the GGGP/HepGP synthase family. Group II subfamily. In terms of assembly, homohexamer. It depends on Mg(2+) as a cofactor.

The protein localises to the cytoplasm. The enzyme catalyses sn-glycerol 1-phosphate + (2E,6E,10E)-geranylgeranyl diphosphate = sn-3-O-(geranylgeranyl)glycerol 1-phosphate + diphosphate. Its pathway is membrane lipid metabolism; glycerophospholipid metabolism. Functionally, prenyltransferase that catalyzes the transfer of the geranylgeranyl moiety of geranylgeranyl diphosphate (GGPP) to the C3 hydroxyl of sn-glycerol-1-phosphate (G1P). This reaction is the first ether-bond-formation step in the biosynthesis of archaeal membrane lipids. This chain is Geranylgeranylglyceryl phosphate synthase, found in Aeropyrum pernix (strain ATCC 700893 / DSM 11879 / JCM 9820 / NBRC 100138 / K1).